A 241-amino-acid polypeptide reads, in one-letter code: Probable septum site-determining protein MinC (241 aa).

The interval 109–135 (PSGARERKVDPSSKTPAKPAEPTYRPT) is disordered.

This sequence belongs to the MinC family. As to quaternary structure, interacts with MinD and FtsZ.

Its function is as follows. Cell division inhibitor that blocks the formation of polar Z ring septums. Rapidly oscillates between the poles of the cell to destabilize FtsZ filaments that have formed before they mature into polar Z rings. Prevents FtsZ polymerization. This is Probable septum site-determining protein MinC from Stutzerimonas stutzeri (strain A1501) (Pseudomonas stutzeri).